The sequence spans 1006 residues: DNA polymerase (1006 aa).

Belongs to the DNA polymerase type-B family. In terms of assembly, interacts with OPG148. Component of the Uracil-DNA glycosylase(UDG)-OPG148-polymerase complex; OPG148 and OPG116/UDG form a heterodimeric processivity factor that associates with OPG071 to form the processive polymerase holoenzyme.

The enzyme catalyses DNA(n) + a 2'-deoxyribonucleoside 5'-triphosphate = DNA(n+1) + diphosphate. In terms of biological role, catalyzes DNA synthesis. Acquires processivity by associating with a heterodimeric processivity factor comprised of the viral OPG148 and OPG116 proteins, thereby forming the DNA polymerase holoenzyme. Displays 3'- to 5' exonuclease activity. Might participate in viral DNA recombination. Does not perform OPG116/D4synthesis across an abasic site. The polypeptide is DNA polymerase (OPG071) (Homo sapiens (Human)).